The sequence spans 717 residues: Delta-1-pyrroline-5-carboxylate synthase A (717 aa).

The segment at 1-296 (MEELDRSRAF…WAPITDSNAR (296 aa)) is glutamate 5-kinase. 3 residues coordinate substrate: serine 60, aspartate 157, and asparagine 176. ATP-binding positions include 196-197 (SD) and 236-242 (RGGMTAK). The segment at 297-717 (DMAVAARESS…YTHQDIPIQA (421 aa)) is gamma-glutamyl phosphate reductase.

It in the N-terminal section; belongs to the glutamate 5-kinase family. This sequence in the C-terminal section; belongs to the gamma-glutamyl phosphate reductase family.

The catalysed reaction is L-glutamate + ATP = L-glutamyl 5-phosphate + ADP. It carries out the reaction L-glutamate 5-semialdehyde + phosphate + NADP(+) = L-glutamyl 5-phosphate + NADPH + H(+). It participates in amino-acid biosynthesis; L-proline biosynthesis; L-glutamate 5-semialdehyde from L-glutamate: step 1/2. The protein operates within amino-acid biosynthesis; L-proline biosynthesis; L-glutamate 5-semialdehyde from L-glutamate: step 2/2. Functionally, P5CS plays a key role in proline biosynthesis, leading to osmoregulation in plants. The polypeptide is Delta-1-pyrroline-5-carboxylate synthase A (P5CSA) (Arabidopsis thaliana (Mouse-ear cress)).